The primary structure comprises 402 residues: Imidazolonepropionase (402 aa).

Positions 66 and 68 each coordinate Fe(3+). Residues His-66 and His-68 each coordinate Zn(2+). Positions 75, 138, and 171 each coordinate 4-imidazolone-5-propanoate. Residue Tyr-138 participates in N-formimidoyl-L-glutamate binding. His-236 serves as a coordination point for Fe(3+). His-236 is a binding site for Zn(2+). Gln-239 provides a ligand contact to 4-imidazolone-5-propanoate. Asp-311 serves as a coordination point for Fe(3+). Asp-311 lines the Zn(2+) pocket. Residues Asn-313 and Gly-315 each contribute to the N-formimidoyl-L-glutamate site. Thr-316 lines the 4-imidazolone-5-propanoate pocket.

This sequence belongs to the metallo-dependent hydrolases superfamily. HutI family. Zn(2+) serves as cofactor. Fe(3+) is required as a cofactor.

It localises to the cytoplasm. It catalyses the reaction 4-imidazolone-5-propanoate + H2O = N-formimidoyl-L-glutamate. Its pathway is amino-acid degradation; L-histidine degradation into L-glutamate; N-formimidoyl-L-glutamate from L-histidine: step 3/3. Catalyzes the hydrolytic cleavage of the carbon-nitrogen bond in imidazolone-5-propanoate to yield N-formimidoyl-L-glutamate. It is the third step in the universal histidine degradation pathway. This Pseudomonas aeruginosa (strain LESB58) protein is Imidazolonepropionase.